A 404-amino-acid chain; its full sequence is Acyl-[acyl-carrier-protein] desaturase 7, chloroplastic (404 aa).

Residues Met1–Ala39 constitute a chloroplast transit peptide. Fe cation-binding residues include Glu138, Glu176, His179, Glu229, Glu262, and His265.

The protein belongs to the fatty acid desaturase type 2 family. In terms of assembly, homodimer. The cofactor is Fe(2+).

Its subcellular location is the plastid. It is found in the chloroplast. It participates in lipid metabolism; fatty acid metabolism. Its function is as follows. Introduces a cis double bond in the acyl chain of an acyl-[acyl-carrier protein]. The sequence is that of Acyl-[acyl-carrier-protein] desaturase 7, chloroplastic from Oryza sativa subsp. indica (Rice).